The primary structure comprises 146 residues: 3-dehydroquinate dehydratase (146 aa).

Residue Tyr-23 is the Proton acceptor of the active site. Substrate is bound by residues Asn-74, His-80, and Asp-87. His-100 acts as the Proton donor in catalysis. Residues 101–102 (IS) and Arg-111 each bind substrate.

It belongs to the type-II 3-dehydroquinase family. As to quaternary structure, homododecamer.

The catalysed reaction is 3-dehydroquinate = 3-dehydroshikimate + H2O. The protein operates within metabolic intermediate biosynthesis; chorismate biosynthesis; chorismate from D-erythrose 4-phosphate and phosphoenolpyruvate: step 3/7. Its function is as follows. Catalyzes a trans-dehydration via an enolate intermediate. The protein is 3-dehydroquinate dehydratase of Bacillus mycoides (strain KBAB4) (Bacillus weihenstephanensis).